Consider the following 335-residue polypeptide: DNA-directed RNA polymerase subunit alpha (335 aa).

Residues 1-233 (MIRDEISVSI…DLFIPFLHGE (233 aa)) form an alpha N-terminal domain (alpha-NTD) region. The segment at 264–335 (KEKIAFQLIF…KLFAIDPPRN (72 aa)) is alpha C-terminal domain (alpha-CTD).

This sequence belongs to the RNA polymerase alpha chain family. As to quaternary structure, in plastids the minimal PEP RNA polymerase catalytic core is composed of four subunits: alpha, beta, beta', and beta''. When a (nuclear-encoded) sigma factor is associated with the core the holoenzyme is formed, which can initiate transcription.

It is found in the plastid. The protein localises to the chloroplast. The enzyme catalyses RNA(n) + a ribonucleoside 5'-triphosphate = RNA(n+1) + diphosphate. Its function is as follows. DNA-dependent RNA polymerase catalyzes the transcription of DNA into RNA using the four ribonucleoside triphosphates as substrates. The chain is DNA-directed RNA polymerase subunit alpha from Pinus thunbergii (Japanese black pine).